We begin with the raw amino-acid sequence, 176 residues long: Salivary antigen 1 (176 aa).

An N-terminal signal peptide occupies residues M1–G18.

It localises to the secreted. In Ctenocephalides felis (Cat flea), this protein is Salivary antigen 1.